A 331-amino-acid polypeptide reads, in one-letter code: Cathepsin 7 (331 aa).

The signal sequence occupies residues 1-17; it reads MTPTVFLSILCLGVALA. A propeptide spans 18-111 (activation peptide); it reads APAPDYNLDA…GKHIQKRNPK (94 aa). A Nuclear localization signal motif is present at residues 33–50; it reads KRSNDRTYSPEEEKQRRA. Asn72 is a glycosylation site (N-linked (GlcNAc...) asparagine). 3 disulfide bridges follow: Cys133–Cys176, Cys167–Cys209, and Cys267–Cys320. Residue Cys136 is part of the active site. Active-site residues include His274 and Asn298.

Belongs to the peptidase C1 family. In terms of tissue distribution, expressed in placenta. Expressed in parietal and spiral artery-associated trophoblast giant cells, most abundantly during the phase of trophoblast invasion. From 14.5 dpc onwards, expressed at lower levels in labyrinth trophoblast cells. Expressed in trophoblast stem cells. Expressed in heart, liver and testis.

Its subcellular location is the endosome. The protein resides in the lysosome. The protein localises to the cytoplasm. It localises to the perinuclear region. It is found in the golgi apparatus. Its subcellular location is the nucleus. The protein resides in the secreted. The protein localises to the extracellular space. Involved in trophoblast cell proliferation and differentiation probably by affecting mitotic cell cycle progression. Proteolytic activity and nuclear localization are essential for its role in cell cycle progression. The protein is Cathepsin 7 of Mus musculus (Mouse).